Consider the following 56-residue polypeptide: Large ribosomal subunit protein bL32 (56 aa).

A disordered region spans residues 1–35 (MAVQQNKPTRSKRGMRRSHDALTATHVSVDKTSGE).

Belongs to the bacterial ribosomal protein bL32 family.

This Proteus mirabilis (strain HI4320) protein is Large ribosomal subunit protein bL32.